Reading from the N-terminus, the 908-residue chain is Translation initiation factor IF-2 (908 aa).

2 disordered regions span residues 52 to 229 (QSHG…AEEA) and 241 to 316 (AGQY…SAQH). Positions 65–84 (KSKTTSTARVTGSSGKSKSV) are enriched in polar residues. 6 stretches are compositionally biased toward basic and acidic residues: residues 94–108 (FEKP…ELAA), 120–138 (AAKD…EERQ), 176–185 (IEVKPKEQPK), 193–229 (PKVE…AEEA), 270–280 (SFEKERREIKR), and 294–303 (KNQDEREIKN). The 170-residue stretch at 409–578 (TRPPVVTIMG…SLQAELMELE (170 aa)) folds into the tr-type G domain. The interval 418-425 (GHVDHGKT) is G1. 418-425 (GHVDHGKT) serves as a coordination point for GTP. The tract at residues 443–447 (GITQH) is G2. The G3 stretch occupies residues 464-467 (DTPG). GTP is bound by residues 464–468 (DTPGH) and 518–521 (NKMD). Residues 518 to 521 (NKMD) form a G4 region. A G5 region spans residues 554-556 (SAK).

Belongs to the TRAFAC class translation factor GTPase superfamily. Classic translation factor GTPase family. IF-2 subfamily.

The protein resides in the cytoplasm. Its function is as follows. One of the essential components for the initiation of protein synthesis. Protects formylmethionyl-tRNA from spontaneous hydrolysis and promotes its binding to the 30S ribosomal subunits. Also involved in the hydrolysis of GTP during the formation of the 70S ribosomal complex. This chain is Translation initiation factor IF-2, found in Psychrobacter arcticus (strain DSM 17307 / VKM B-2377 / 273-4).